Here is a 226-residue protein sequence, read N- to C-terminus: Late expression factor 7 (226 aa).

The F-box domain occupies 9 to 58 (RAKRIRLPLEIIDTILQYLDPILHAKVVGLTTRVKCRLLRDNNVEDYLKL).

As to quaternary structure, interacts with host S-phase kinase-associated protein 1/SKP1.

Its subcellular location is the host nucleus. Its pathway is protein degradation; proteasomal ubiquitin-dependent pathway. Functionally, F-box protein that manipulates the host DNA damage response (DRR) in order to promote viral multiplication. Acts as a substrate recognition component of SKP1/Cullin/F-box (SCF) complexes for targeted protein polyubiquitination. The chain is Late expression factor 7 (LEF-7) from Lepidoptera (butterflies and moths).